Consider the following 148-residue polypeptide: uncharacterized protein (148 aa).

A compositionally biased stretch (polar residues) spans 1–17 (MEGLQRSTISFRRQGSS). The segment at 1 to 148 (MEGLQRSTIS…SRRRIVTKKR (148 aa)) is disordered. Composition is skewed to basic and acidic residues over residues 36-47 (EQKDESQRDEQP) and 58-67 (KPIDEKDKLR). Phosphoserine is present on residues Ser100 and Ser107. Over residues 128–148 (VNPRKRPPKRRSRRRIVTKKR) the composition is skewed to basic residues.

This is an uncharacterized protein from Arabidopsis thaliana (Mouse-ear cress).